The chain runs to 57 residues: COP9 signalosome complex subunit 9 (57 aa).

This sequence belongs to the CSN9 family. Component of the CSN complex, probably composed of cops1, cops2, cops3, cops4, cops5, cops6, cops7, cops8 and cops9.

It localises to the nucleus. The protein localises to the cytoplasm. It is found in the nucleoplasm. Functionally, component of the COP9 signalosome complex (CSN), a complex involved in various cellular and developmental processes. The CSN complex is an essential regulator of the ubiquitin (Ubl) conjugation pathway by mediating the deneddylation of the cullin subunits of SCF-type E3 ligase complexes, leading to decrease the Ubl ligase activity. May play a role in cell proliferation. The sequence is that of COP9 signalosome complex subunit 9 from Xenopus laevis (African clawed frog).